A 79-amino-acid polypeptide reads, in one-letter code: Raniseptin-9 (79 aa).

The N-terminal stretch at 1–22 (MAFLKKSLFLVLFLGIVSLSIC) is a signal peptide. Positions 23–49 (EEEKREGEEEEKQEEENEELSEEELRE) are excised as a propeptide. Residues 27-46 (REGEEEEKQEEENEELSEEE) are disordered. Residues 30 to 44 (EEEEKQEEENEELSE) are compositionally biased toward acidic residues.

It belongs to the frog skin active peptide (FSAP) family. Dermaseptin subfamily. Expressed by the skin glands.

It is found in the secreted. Has antibacterial activity. The polypeptide is Raniseptin-9 (Boana raniceps (Chaco tree frog)).